The sequence spans 422 residues: Dihydroorotase (422 aa).

2 residues coordinate Zn(2+): His-61 and His-63. Residues 63–65 and Asn-95 contribute to the substrate site; that span reads HLR. Zn(2+) is bound at residue Asp-153. Asn-278 is a substrate binding site. Zn(2+) is bound at residue Asp-305. The active site involves Asp-305. Substrate is bound by residues His-309 and 322 to 323; that span reads PG.

The protein belongs to the metallo-dependent hydrolases superfamily. DHOase family. Class I DHOase subfamily. As to quaternary structure, monomer. Forms a 1:1 stoichiometric complex with PyrB. The complex exists as an equilibrium mixture of heterohexamers, composed of 3 PyrC and 3 PyrB subunits, and dodecamers. The complex has both DHOase and ATCase activities. Zn(2+) serves as cofactor.

The catalysed reaction is (S)-dihydroorotate + H2O = N-carbamoyl-L-aspartate + H(+). It functions in the pathway pyrimidine metabolism; UMP biosynthesis via de novo pathway; (S)-dihydroorotate from bicarbonate: step 3/3. The monomer has very low activity by itself. Activated several thousandfold by formation of a complex with PyrB aspartate carbamoyltransferase (ATCase). Functionally, catalyzes the reversible cyclization of carbamoyl aspartate to dihydroorotate. The sequence is that of Dihydroorotase from Aquifex aeolicus (strain VF5).